Here is a 403-residue protein sequence, read N- to C-terminus: Argininosuccinate synthase (403 aa).

ATP contacts are provided by residues 13–21 (AYSGGLDTS) and alanine 40. 2 residues coordinate L-citrulline: tyrosine 91 and serine 96. Residue glycine 121 coordinates ATP. Positions 123, 127, and 128 each coordinate L-aspartate. Asparagine 127 serves as a coordination point for L-citrulline. The L-citrulline site is built by arginine 131, serine 180, serine 189, glutamate 265, and tyrosine 277.

It belongs to the argininosuccinate synthase family. Type 1 subfamily. In terms of assembly, homotetramer.

The protein localises to the cytoplasm. It carries out the reaction L-citrulline + L-aspartate + ATP = 2-(N(omega)-L-arginino)succinate + AMP + diphosphate + H(+). Its pathway is amino-acid biosynthesis; L-arginine biosynthesis; L-arginine from L-ornithine and carbamoyl phosphate: step 2/3. This is Argininosuccinate synthase from Leptospira interrogans serogroup Icterohaemorrhagiae serovar copenhageni (strain Fiocruz L1-130).